The following is a 451-amino-acid chain: Probable DNA polymerase delta small subunit (451 aa).

Belongs to the DNA polymerase delta/II small subunit family. In terms of assembly, heterodimer with subunits of 125 kDa and 50 kDa.

It is found in the nucleus. The catalysed reaction is DNA(n) + a 2'-deoxyribonucleoside 5'-triphosphate = DNA(n+1) + diphosphate. The function of the small subunit is not yet clear. This Caenorhabditis elegans protein is Probable DNA polymerase delta small subunit.